A 367-amino-acid polypeptide reads, in one-letter code: Beta sliding clamp (367 aa).

It belongs to the beta sliding clamp family. Forms a ring-shaped head-to-tail homodimer around DNA which binds and tethers DNA polymerases and other proteins to the DNA. The DNA replisome complex has a single clamp-loading complex (3 tau and 1 each of delta, delta', psi and chi subunits) which binds 3 Pol III cores (1 core on the leading strand and 2 on the lagging strand) each with a beta sliding clamp dimer. Additional proteins in the replisome are other copies of gamma, psi and chi, Ssb, DNA helicase and RNA primase.

It is found in the cytoplasm. Confers DNA tethering and processivity to DNA polymerases and other proteins. Acts as a clamp, forming a ring around DNA (a reaction catalyzed by the clamp-loading complex) which diffuses in an ATP-independent manner freely and bidirectionally along dsDNA. Initially characterized for its ability to contact the catalytic subunit of DNA polymerase III (Pol III), a complex, multichain enzyme responsible for most of the replicative synthesis in bacteria; Pol III exhibits 3'-5' exonuclease proofreading activity. The beta chain is required for initiation of replication as well as for processivity of DNA replication. This is Beta sliding clamp (dnaN) from Pseudomonas aeruginosa (strain ATCC 15692 / DSM 22644 / CIP 104116 / JCM 14847 / LMG 12228 / 1C / PRS 101 / PAO1).